The following is a 420-amino-acid chain: UDP-N-acetylglucosamine 1-carboxyvinyltransferase (420 aa).

Phosphoenolpyruvate is bound at residue 22 to 23; that stretch reads KN. Residue Arg-94 participates in UDP-N-acetyl-alpha-D-glucosamine binding. The active-site Proton donor is Cys-118. 2-(S-cysteinyl)pyruvic acid O-phosphothioketal is present on Cys-118. UDP-N-acetyl-alpha-D-glucosamine contacts are provided by Asp-307 and Ile-329.

The protein belongs to the EPSP synthase family. MurA subfamily.

Its subcellular location is the cytoplasm. It catalyses the reaction phosphoenolpyruvate + UDP-N-acetyl-alpha-D-glucosamine = UDP-N-acetyl-3-O-(1-carboxyvinyl)-alpha-D-glucosamine + phosphate. The protein operates within cell wall biogenesis; peptidoglycan biosynthesis. Its function is as follows. Cell wall formation. Adds enolpyruvyl to UDP-N-acetylglucosamine. The chain is UDP-N-acetylglucosamine 1-carboxyvinyltransferase from Gluconacetobacter diazotrophicus (strain ATCC 49037 / DSM 5601 / CCUG 37298 / CIP 103539 / LMG 7603 / PAl5).